Consider the following 156-residue polypeptide: Small ribosomal subunit protein uS7 (156 aa).

Belongs to the universal ribosomal protein uS7 family. In terms of assembly, part of the 30S ribosomal subunit. Contacts proteins S9 and S11.

Its function is as follows. One of the primary rRNA binding proteins, it binds directly to 16S rRNA where it nucleates assembly of the head domain of the 30S subunit. Is located at the subunit interface close to the decoding center, probably blocks exit of the E-site tRNA. The protein is Small ribosomal subunit protein uS7 of Synechococcus sp. (strain JA-2-3B'a(2-13)) (Cyanobacteria bacterium Yellowstone B-Prime).